Reading from the N-terminus, the 606-residue chain is Putative helicase 172L (606 aa).

A Helicase ATP-binding domain is found at 59–264 (GEKTWGVRGG…WAQLRFCGYK (206 aa)). 72–79 (LCMGLGKT) serves as a coordination point for ATP. Residues 437 to 586 (YIKSSNFEIS…ASYLEGKERI (150 aa)) form the Helicase C-terminal domain.

It belongs to the SNF2/RAD54 helicase family.

This is Putative helicase 172L from Invertebrate iridescent virus 6 (IIV-6).